Consider the following 98-residue polypeptide: NADH-ubiquinone oxidoreductase chain 4L (98 aa).

3 helical membrane-spanning segments follow: residues 1-21, 29-49, and 61-81; these read MSLT…GLLM, SLLC…MVIL, and IILL…LVMV.

This sequence belongs to the complex I subunit 4L family. In terms of assembly, core subunit of respiratory chain NADH dehydrogenase (Complex I) which is composed of 45 different subunits.

It is found in the mitochondrion inner membrane. The catalysed reaction is a ubiquinone + NADH + 5 H(+)(in) = a ubiquinol + NAD(+) + 4 H(+)(out). Core subunit of the mitochondrial membrane respiratory chain NADH dehydrogenase (Complex I) which catalyzes electron transfer from NADH through the respiratory chain, using ubiquinone as an electron acceptor. Part of the enzyme membrane arm which is embedded in the lipid bilayer and involved in proton translocation. This Vampyressa thyone (Northern little yellow-eared bat) protein is NADH-ubiquinone oxidoreductase chain 4L (MT-ND4L).